The primary structure comprises 1723 residues: Lys-gingipain (1723 aa).

The N-terminal stretch at 1–24 (MRKLLLLIAASLLGVGLYAQSAKI) is a signal peptide. The propeptide occupies 25–228 (KLDAPTTRTT…ETAYKQLFNR (204 aa)). The Ca(2+) site is built by D313, D337, D339, F341, and E343. H444 functions as the Proton donor in the catalytic mechanism. The active-site Nucleophile is C477. Residues F482 and E491 each contribute to the Ca(2+) site. The interval 964-985 (WDAPNGTPNPNPNPNPGTTTLS) is disordered. 20 residues coordinate Ca(2+): S987, E989, D1000, D1002, D1004, H1006, S1021, G1023, N1042, D1145, E1146, D1430, E1432, D1444, D1446, D1448, N1450, S1480, N1495, and D1585.

The protein belongs to the peptidase C25 family. In terms of processing, proteolytically cleaved into a catalytic subunit and three adhesins. Arg-gingipain is involved in this post-translational processing.

Its subcellular location is the secreted. The enzyme catalyses Endopeptidase with strict specificity for lysyl bonds.. Activated by the thiol-reducing agents cysteine, 2-mercaptoethanol and dithiothreitol. Inhibited by iodacetamide, iodoacetic acid, leupeptin, tosyl-L-lysine and tosyl-L-phenylalanine. Not inhibited by elastatinal, chymostatin, cystatins, alpha1-antichymotrypsin or the serine protease inhibitors phenylmethylsulfonyl fluoride and diisopropylfluorophosphate. Not inhibited by metal ion chelators. Inhibited by the heavy metal ions Fe(3+), Zn(2+), Cu(2+) and Mn(2+). In terms of biological role, cysteine proteinase with a strong preference for substrates with Lys in the P1 position. Hydrolyzes bovine hemoglobin, bovine serum albumin, casein, human placental type I collagen and human IgA and IgG. Disrupts the functions of polymorphonuclear leukocytes. May act as a virulence factor in the development of peridontal disease. Involved in the coaggregation of P.gingivalis with other oral bacteria. The protein is Lys-gingipain of Porphyromonas gingivalis (strain ATCC 33277 / DSM 20709 / CIP 103683 / JCM 12257 / NCTC 11834 / 2561).